A 470-amino-acid polypeptide reads, in one-letter code: MTASCWTICLFLLGSVTEFIVLASPEVNESQQQHPQNVYHDIGVTRNKIVTAQFECYQKIMKDNSQDRRGPVCNRTWDGWLCWDDTEAGITSEQHCPDYFQDFDPTEMVTKICTESGQWFLHPESNRTWTNFTRCNLHTTEGRRTAMNLFYLALIGHGLSLTSLFISLGIFFHFKSLSCQRITLHKNLFFSFVLNSIITIIWLTAVANNQELVQQNPISCKISQFIHLYIFGCNYFWMLCEGIYLHTLIVVAVFAEKQHLMWYYLLGWGFPLIPATIHAVARSYYYNDNCWISSNTSLLYIIHGPICAAMLVNLFFLLNIVRVLITKLKVTHQAKSSLYMKAVRATLILVPLLGIQYVLLPYKPSGRVSAEIYDYIMHILMHYQGLLVATIFCFFNGEVQAVLRRHWNQYRIQFGSTITQSDALRSASYTASSITEVQGCYSIDGHTEHLNGKNYHDFDNAIIKPENPFA.

The first 23 residues, 1–23 (MTASCWTICLFLLGSVTEFIVLA), serve as a signal peptide directing secretion. The Extracellular portion of the chain corresponds to 24-147 (SPEVNESQQQ…HTTEGRRTAM (124 aa)). N-linked (GlcNAc...) asparagine glycosylation is found at asparagine 28, asparagine 74, asparagine 126, and asparagine 131. 3 disulfide bridges follow: cysteine 56/cysteine 82, cysteine 73/cysteine 113, and cysteine 96/cysteine 135. Residues 148–172 (NLFYLALIGHGLSLTSLFISLGIFF) form a helical membrane-spanning segment. The Cytoplasmic portion of the chain corresponds to 173-183 (HFKSLSCQRIT). Residues 184 to 206 (LHKNLFFSFVLNSIITIIWLTAV) traverse the membrane as a helical segment. Residues 207 to 217 (ANNQELVQQNP) are Extracellular-facing. A helical membrane pass occupies residues 218-246 (ISCKISQFIHLYIFGCNYFWMLCEGIYLH). Residues 247–260 (TLIVVAVFAEKQHL) lie on the Cytoplasmic side of the membrane. The helical transmembrane segment at 261-281 (MWYYLLGWGFPLIPATIHAVA) threads the bilayer. Over 282–297 (RSYYYNDNCWISSNTS) the chain is Extracellular. N-linked (GlcNAc...) asparagine glycosylation is present at asparagine 295. Residues 298–322 (LLYIIHGPICAAMLVNLFFLLNIVR) traverse the membrane as a helical segment. Residues 323–337 (VLITKLKVTHQAKSS) lie on the Cytoplasmic side of the membrane. Residues 338–359 (LYMKAVRATLILVPLLGIQYVL) form a helical membrane-spanning segment. The Extracellular segment spans residues 360–374 (LPYKPSGRVSAEIYD). A helical membrane pass occupies residues 375-395 (YIMHILMHYQGLLVATIFCFF). Residues 396-470 (NGEVQAVLRR…AIIKPENPFA (75 aa)) are Cytoplasmic-facing.

Belongs to the G-protein coupled receptor 2 family.

The protein resides in the cell membrane. Functionally, may function as G protein-coupled receptor for calcitonin-gene-related peptides and adrenomedullin. Specificity may be modulated by accessory proteins. May activate cAMP-dependent pathway. The chain is Calcitonin gene-related peptide type 1 receptor (calcrla) from Danio rerio (Zebrafish).